A 246-amino-acid polypeptide reads, in one-letter code: MTMDKSELVQKAKLAEQAERYDDMAAAMKAVTEQGHELSNEERNLLSVAYKNVVGARRSSWRVISSIEQKTERNEKKQQMGKEYREKIEAELQDICNDVLQLLDKYLIPNATQPESKVFYLKMKGDYFRYLSEVASGDNKQTTVSNSQQAYQEAFEISKKEMQPTHPIRLGLALNFSVFYYEILNSPEKACSLAKTAFDEAIAELDTLNEESYKDSTLIMQLLRDNLTLWTSENQGDEGDAGEGEN.

Methionine 1 is subject to N-acetylmethionine. N-acetylthreonine; in 14-3-3 protein beta/alpha, N-terminally processed is present on threonine 2. The residue at position 2 (threonine 2) is a Phosphothreonine. N6-acetyllysine is present on lysine 5. An N6-acetyllysine; alternate modification is found at lysine 51. A Glycyl lysine isopeptide (Lys-Gly) (interchain with G-Cter in SUMO2); alternate cross-link involves residue lysine 51. Residue serine 60 is modified to Phosphoserine. An N6-acetyllysine modification is found at lysine 70. Residues tyrosine 84 and tyrosine 106 each carry the 3'-nitrotyrosine modification. Position 117 is an N6-acetyllysine (lysine 117). Phosphoserine is present on residues serine 186 and serine 232.

It belongs to the 14-3-3 family. In terms of assembly, homodimer. Interacts with SAMSN1 and PRKCE. Interacts with AKAP13. Interacts with SSH1 and TORC2/CRTC2. Interacts with ABL1; the interaction results in cytoplasmic location of ABL1 and inhibition of cABL-mediated apoptosis. Interacts with ROR2 (dimer); the interaction results in phosphorylation of YWHAB on tyrosine residues. Interacts with GAB2. Interacts with YAP1 (phosphorylated form). Interacts with the phosphorylated (by AKT1) form of SRPK2. Interacts with PKA-phosphorylated AANAT. Interacts with MYO1C. Interacts with SIRT2. Interacts with the 'Thr-369' phosphorylated form of DAPK2. Interacts with PI4KB, TBC1D22A and TBC1D22B. Interacts with the 'Ser-1134' and 'Ser-1161' phosphorylated form of SOS1. Interacts (via phosphorylated form) with YWHAB; this interaction occurs in a protein kinase AKT1-dependent manner. Interacts with SLITRK1. Interacts with SYNPO2 (phosphorylated form); YWHAB competes with ACTN2 for interaction with SYNPO2. Interacts with RIPOR2 (via phosphorylated form); this interaction occurs in a chemokine-dependent manner and does not compete for binding of RIPOR2 with RHOA nor blocks inhibition of RIPOR2-mediated RHOA activity. Interacts with MARK2 and MARK3. Interacts with TESK1; the interaction is dependent on the phosphorylation of TESK1 'Ser-439' and inhibits TESK1 kinase activity. Interacts with MEFV. Interacts with HDAC4. Interacts with ADAM22 (via C-terminus). Post-translationally, the alpha, brain-specific form differs from the beta form in being phosphorylated. Phosphorylated on Ser-60 by protein kinase C delta type catalytic subunit in a sphingosine-dependent fashion.

Its subcellular location is the cytoplasm. It localises to the melanosome. In terms of biological role, adapter protein implicated in the regulation of a large spectrum of both general and specialized signaling pathways. Binds to a large number of partners, usually by recognition of a phosphoserine or phosphothreonine motif. Binding generally results in the modulation of the activity of the binding partner. Negative regulator of osteogenesis. Blocks the nuclear translocation of the phosphorylated form (by AKT1) of SRPK2 and antagonizes its stimulatory effect on cyclin D1 expression resulting in blockage of neuronal apoptosis elicited by SRPK2. Negative regulator of signaling cascades that mediate activation of MAP kinases via AKAP13. The polypeptide is 14-3-3 protein beta/alpha (YWHAB) (Bos taurus (Bovine)).